The primary structure comprises 359 residues: Pyruvate dehydrogenase E1 component subunit beta, mitochondrial (359 aa).

The N-terminal 30 residues, 1–30, are a transit peptide targeting the mitochondrion; sequence MAAVAGLVRGPLRQASGLLKRRFHRSAPAA. The residue at position 67 (Y67) is a Phosphotyrosine. Thiamine diphosphate is bound at residue E89. K(+) contacts are provided by I142, A190, I191, D193, and N195. Position 354 is an N6-acetyllysine (K354).

In terms of assembly, heterotetramer of two PDHA1 and two PDHB subunits. The heterotetramer interacts with DLAT, and is part of the multimeric pyruvate dehydrogenase complex that contains multiple copies of pyruvate dehydrogenase (E1), dihydrolipoamide acetyltransferase (DLAT, E2) and lipoamide dehydrogenase (DLD, E3). These subunits are bound to an inner core composed of about 48 DLAT and 12 PDHX molecules. Interacts with DLAT. Thiamine diphosphate serves as cofactor.

It localises to the mitochondrion matrix. It carries out the reaction N(6)-[(R)-lipoyl]-L-lysyl-[protein] + pyruvate + H(+) = N(6)-[(R)-S(8)-acetyldihydrolipoyl]-L-lysyl-[protein] + CO2. The pyruvate dehydrogenase complex catalyzes the overall conversion of pyruvate to acetyl-CoA and CO(2), and thereby links the glycolytic pathway to the tricarboxylic cycle. The protein is Pyruvate dehydrogenase E1 component subunit beta, mitochondrial (Pdhb) of Rattus norvegicus (Rat).